A 433-amino-acid polypeptide reads, in one-letter code: Pyrimidine-nucleoside phosphorylase (433 aa).

81–83 contributes to the phosphate binding site; sequence KHS. Residues Gly88 and Thr90 each contribute to the K(+) site. Phosphate-binding positions include Thr92, 108–110, and Thr120; that span reads KMS. Substrate contacts are provided by Arg168 and Lys187. K(+) is bound by residues Leu243, Ala246, and Glu255.

The protein belongs to the thymidine/pyrimidine-nucleoside phosphorylase family. Homodimer. It depends on K(+) as a cofactor.

The catalysed reaction is uridine + phosphate = alpha-D-ribose 1-phosphate + uracil. The enzyme catalyses thymidine + phosphate = 2-deoxy-alpha-D-ribose 1-phosphate + thymine. It catalyses the reaction 2'-deoxyuridine + phosphate = 2-deoxy-alpha-D-ribose 1-phosphate + uracil. In terms of biological role, catalyzes phosphorolysis of the pyrimidine nucleosides uridine, thymidine and 2'-deoxyuridine with the formation of the corresponding pyrimidine base and ribose-1-phosphate. This is Pyrimidine-nucleoside phosphorylase (pdp) from Staphylococcus epidermidis (strain ATCC 35984 / DSM 28319 / BCRC 17069 / CCUG 31568 / BM 3577 / RP62A).